Reading from the N-terminus, the 620-residue chain is Glutathione-regulated potassium-efflux system protein KefC (620 aa).

Transmembrane regions (helical) follow at residues 4 to 24 (HTLL…PIAV), 26 to 46 (LGLG…PWGL), 54 to 74 (SILH…GLEL), 90 to 110 (GALQ…FLGL), 114 to 134 (VAEL…MQAM), 149 to 169 (FAVL…IPLL), 178 to 198 (LGAF…VVLL), 218 to 238 (VFSA…EEVG), 270 to 290 (GLLL…GTLV), 294 to 314 (LRIL…LWLV), 327 to 347 (WFAV…GAAQ), and 359 to 379 (ALTL…VLLT). In terms of domain architecture, RCK N-terminal spans 399–518 (QPRVIVAGFG…AGVAMPERET (120 aa)). Positions 599-620 (QGTAEGKHSGEAADEPEVKPSI) are disordered.

Belongs to the monovalent cation:proton antiporter 2 (CPA2) transporter (TC 2.A.37) family. KefC subfamily. As to quaternary structure, homodimer. Interacts with the regulatory subunit KefF.

Its subcellular location is the cell inner membrane. Functionally, pore-forming subunit of a potassium efflux system that confers protection against electrophiles. Catalyzes K(+)/H(+) antiport. The protein is Glutathione-regulated potassium-efflux system protein KefC of Salmonella choleraesuis (strain SC-B67).